A 240-amino-acid polypeptide reads, in one-letter code: MGTTGTNDGATTPPANTSTPAVDIDVRDLGTVDYEDTWHLQANLAAQRAEEKIPDTILLLQHPPTYTAGKRTQDSDRPTNGLPVVDVDRGGRITWHGPGQLVAYPIIKLADPVDVVDYVRRLEQALIQTCEDLGLHGTGRVEGRSGVWLPAGVINGELKPARKIAAIGIRVTRGVTMHGVALNCDNTMEYYDHIVPCGLADAGVTTLTEELGRDVSVSDAYSSLAHNLVDALNGDLPVHS.

The tract at residues 1 to 22 (MGTTGTNDGATTPPANTSTPAV) is disordered. Over residues 10 to 21 (ATTPPANTSTPA) the composition is skewed to low complexity. In terms of domain architecture, BPL/LPL catalytic spans 51 to 236 (EKIPDTILLL…NLVDALNGDL (186 aa)). Residues 89–96 (RGGRITWH), 166–168 (AIG), and 179–181 (GVA) contribute to the substrate site. Cys197 (acyl-thioester intermediate) is an active-site residue.

Belongs to the LipB family.

Its subcellular location is the cytoplasm. It catalyses the reaction octanoyl-[ACP] + L-lysyl-[protein] = N(6)-octanoyl-L-lysyl-[protein] + holo-[ACP] + H(+). Its pathway is protein modification; protein lipoylation via endogenous pathway; protein N(6)-(lipoyl)lysine from octanoyl-[acyl-carrier-protein]: step 1/2. In terms of biological role, catalyzes the transfer of endogenously produced octanoic acid from octanoyl-acyl-carrier-protein onto the lipoyl domains of lipoate-dependent enzymes. Lipoyl-ACP can also act as a substrate although octanoyl-ACP is likely to be the physiological substrate. This Corynebacterium jeikeium (strain K411) protein is Octanoyltransferase.